The following is a 113-amino-acid chain: Dynein light chain Tctex-type 1 (113 aa).

Position 1 is an N-acetylmethionine (M1). The interaction with GNB1 stretch occupies residues 41 to 113; it reads QWTTNVLEQT…CIVSTFGLSI (73 aa).

The protein belongs to the dynein light chain Tctex-type family. In terms of assembly, homodimer. The cytoplasmic dynein 1 complex consists of two catalytic heavy chains (HCs) and a number of non-catalytic subunits presented by intermediate chains (ICs), light intermediate chains (LICs) and light chains (LCs); the composition seems to vary in respect to the IC, LIC and LC composition. The heavy chain homodimer serves as a scaffold for the probable homodimeric assembly of the respective non-catalytic subunits. The ICs and LICs bind directly to the HC dimer and the LCs assemble on the IC dimer. DYNLT1 and DYNLT3 compete for association with dynein IC (DYNC1I1 or DYNC1I2). Self-associates. Interacts with RHO. Interacts with DYNC1I1 and DYNC1I2. Interacts with DOC2A, DOC2B and SCN10A. Interacts with PVR. Interacts with SVIL isoform 2. Interacts with GNB1; the interaction occurs in presence of guanine nucleotide-binding protein G(T) subunit gamma; the interaction diminishes the association of DYNLT1 with dynein IC (DYNC1I1 or DYNC1I2). Interacts with GNB2, GNB3 and GNB5; the interactions occur in presence of guanine nucleotide-binding protein G(T) subunit gamma. Interacts with ACVR2B and ARHGEF2. Interacts with DNAI4. Interacts with CFAP61. Phosphorylated by BMPR2. The phosphorylation status is proposed to regulate the association with the cytoplasmic dynein complex and may have role in cytoplasmic dynein cargo release. High level in testis (germ cell-specific). Expressed in sperm (at protein level). 200-fold lower in liver, brain, heart, spleen, and kidney. Levels in thymus and two embryonal carcinoma cell lines were several-fold higher than this low constitutive level.

The protein resides in the golgi apparatus. It localises to the cytoplasm. It is found in the cytoskeleton. Its subcellular location is the spindle. Its function is as follows. Acts as one of several non-catalytic accessory components of the cytoplasmic dynein 1 complex that are thought to be involved in linking dynein to cargos and to adapter proteins that regulate dynein function. Cytoplasmic dynein 1 acts as a motor for the intracellular retrograde motility of vesicles and organelles along microtubules. Binds to transport cargos and is involved in apical cargo transport such as rhodopsin-bearing vesicles in polarized epithelia. May also be a accessory component of axonemal dynein. Plays an important role in male germ cell development and function. Candidate for involvement in male sterility. In terms of biological role, plays a role in neuronal morphogenesis; the function is independent of cytoplasmic dynein and seems to be coupled to regulation of the actin cytoskeleton by enhancing Rac1 activity. The function in neurogenesis may be regulated by association with a G-protein beta-gamma dimer. May function as a receptor-independent activator of heterotrimeric G-protein signaling; the activation appears to be independent of a nucleotide exchange. Plays a role in regulating neurogenesis; inhibits the genesis of neurons from precursor cells during cortical development presumably by antagonizing ARHGEF2. Unrelated to the role in retrograde microtubule-associated movement may play a role in the dimerization of cytoplasmic proteins/domains such as for ACVR2B. Binds to the cytoplasmic domain of ACVR2B and, in vitro, inhibits ACVR2B signaling. Involved in the regulation of mitotic spindle orientation. This chain is Dynein light chain Tctex-type 1 (Dynlt1), found in Mus musculus (Mouse).